We begin with the raw amino-acid sequence, 1273 residues long: Receptor-type tyrosine-protein phosphatase C (1273 aa).

Residues 1 to 23 (MYLWLKLLAFSLALLGPEVFVTG) form the signal peptide. At 24-546 (QGTTDDGLDT…KPQSTSYNSK (523 aa)) the chain is on the extracellular side. The tract at residues 45-192 (LPARTTEFTP…TEIATPQTKP (148 aa)) is disordered. Polar residues-rich tracts occupy residues 50–77 (TEFT…SSTL), 84–111 (QPDS…TLTA), and 141–192 (RNST…QTKP). Residue Asn-62 is glycosylated (N-linked (GlcNAc...) asparagine). N-linked (GlcNAc...) asparagine glycosylation is found at Asn-142, Asn-153, Asn-164, Asn-178, Asn-200, Asn-245, Asn-250, Asn-271, Asn-282, Asn-327, Asn-333, Asn-371, Asn-374, Asn-471, and Asn-502. Fibronectin type-III domains are found at residues 361–452 (PEML…TKAA) and 453–545 (RPGK…SYNS). Residues 547–567 (ALIIFLVFLIIVTSIALLVVL) traverse the membrane as a helical segment. At 568–1273 (YKIYDLRKKR…PMSPALTPSS (706 aa)) the chain is on the cytoplasmic side. Tyrosine-protein phosphatase domains are found at residues 622-881 (FLAE…LVEY) and 913-1196 (LEAE…MASI). Tyr-652 carries the phosphotyrosine modification. Substrate is bound by residues Asp-790, 822-828 (CSAGVGR), and Gln-866. The Phosphocysteine intermediate role is filled by Cys-822. 7 positions are modified to phosphoserine: Ser-944, Ser-963, Ser-966, Ser-970, Ser-973, Ser-974, and Ser-978. The segment at 960 to 984 (LEMSKESEAESDESSDEDSDSEETS) is disordered. Residues 968–981 (AESDESSDEDSDSE) are compositionally biased toward acidic residues. Cys-1137 serves as the catalytic Phosphocysteine intermediate. Residues Ser-1209 and Ser-1266 each carry the phosphoserine modification. Residues 1219–1273 (VDGAKQDANCVQPADPLNKAQEDSKEVGASEPASGSEEPEHSANGPMSPALTPSS) are disordered.

Belongs to the protein-tyrosine phosphatase family. Receptor class 1/6 subfamily. As to quaternary structure, interacts with SKAP1. Interacts with DPP4; the interaction is enhanced in an interleukin-12-dependent manner in activated lymphocytes. Binds GANAB and PRKCSH. Interacts with CD53; this interaction stabilizes PTPRC on the membrane and is required for optimal phosphatase activity. Interacts with CLEC10A. In terms of processing, heavily N- and O-glycosylated. The cytoplasmic domain contains potential phosphorylation sites. Isoform 1 and isoform 2 are found in thymocyte and lymph node. Isoform 4 and isoform 3 are found in the lymph nod.

Its subcellular location is the cell membrane. It is found in the membrane raft. It localises to the synapse. The enzyme catalyses O-phospho-L-tyrosyl-[protein] + H2O = L-tyrosyl-[protein] + phosphate. Functionally, protein tyrosine-protein phosphatase required for T-cell activation through the antigen receptor. Acts as a positive regulator of T-cell coactivation upon binding to DPP4. The first PTPase domain has enzymatic activity, while the second one seems to affect the substrate specificity of the first one. Upon T-cell activation, recruits and dephosphorylates SKAP1 and FYN. Dephosphorylates LYN, and thereby modulates LYN activity. Interacts with CLEC10A at antigen presenting cell-T cell contact; CLEC10A on immature dendritic cells recognizes Tn antigen-carrying PTPRC/CD45 receptor on effector T cells and modulates T cell activation threshold to limit autoreactivity. This is Receptor-type tyrosine-protein phosphatase C (Ptprc) from Rattus norvegicus (Rat).